Reading from the N-terminus, the 295-residue chain is Protein gurken (295 aa).

The first 26 residues, 1–26 (MMQIPFTRIFKVIFVLSTIVAVTDCC), serve as a signal peptide directing secretion. Over 27–247 (SSRILLLREH…TAQRKVRMAH (221 aa)) the chain is Extracellular. 2 disordered regions span residues 78 to 111 (EASAQEEADQLHPDTDPNPDSGGQLPNADDSIAA) and 124 to 175 (TDTW…NDKE). The segment covering 124-139 (TDTWLASESSTPITDS) has biased composition (polar residues). Composition is skewed to low complexity over residues 140-152 (ETVTTPETVTHTG) and 159-171 (SSSSTPDSTTPSP). Positions 179-224 (QMLPCSEAYNTSFCLNGGHCFQHPMVNNTVFHSCLCVNDYDGERCA) constitute an EGF-like domain. Cystine bridges form between Cys183/Cys198, Cys192/Cys212, and Cys214/Cys223. 2 N-linked (GlcNAc...) asparagine glycosylation sites follow: Asn188 and Asn205. Positions 215–245 (VNDYDGERCAYKSWNGDYIYSPPTAQRKVRM) are interaction with cni. The chain crosses the membrane as a helical span at residues 248–268 (IVFSFPVLLMLSSLYVLFAAV). Residues 269-295 (FMLRNVPDYRRKQQQLHLHKQRFFVRC) are Cytoplasmic-facing.

As to quaternary structure, interacts with cni. As to expression, expressed in nurse cells and oocyte up to oogenesis stage 7. Specifically accumulates in dorsal anterior corner of the oocyte during stages 9/10, at later stages expression is seen as an anterior ring. In stage 10 ovaries, it is concentrated between the oocyte nucleus and the adjacent oolemma. During vitellogenesis stage it can be detected at the oocyte surface, especially on the microvilli. It is also found at the microvilli covering the apical surface of the follicular epithelium and within follicle cells.

The protein localises to the cell membrane. Critical for defining the anterior-posterior and dorsal-ventral axes of the egg. May signal directly to dorsal follicle cells through the receptor torpedo (top). During oogenesis this signaling pathway instructs follicle cells to follow a dorsal pathway of development rather than the default ventral pathway. This is Protein gurken (grk) from Drosophila melanogaster (Fruit fly).